The primary structure comprises 176 residues: NAD(P)H-quinone oxidoreductase subunit 6, chloroplastic (176 aa).

5 helical membrane-spanning segments follow: residues 10–30 (FLLV…VLFP), 32–52 (PIFS…LYIL), 61–81 (AQLL…VMFM), 95–115 (VGDG…ISTI), and 152–172 (FFLP…GAIS).

The protein belongs to the complex I subunit 6 family. As to quaternary structure, NDH is composed of at least 16 different subunits, 5 of which are encoded in the nucleus.

The protein localises to the plastid. The protein resides in the chloroplast thylakoid membrane. It catalyses the reaction a plastoquinone + NADH + (n+1) H(+)(in) = a plastoquinol + NAD(+) + n H(+)(out). The enzyme catalyses a plastoquinone + NADPH + (n+1) H(+)(in) = a plastoquinol + NADP(+) + n H(+)(out). Functionally, NDH shuttles electrons from NAD(P)H:plastoquinone, via FMN and iron-sulfur (Fe-S) centers, to quinones in the photosynthetic chain and possibly in a chloroplast respiratory chain. The immediate electron acceptor for the enzyme in this species is believed to be plastoquinone. Couples the redox reaction to proton translocation, and thus conserves the redox energy in a proton gradient. This is NAD(P)H-quinone oxidoreductase subunit 6, chloroplastic (ndhG) from Aethionema cordifolium (Lebanon stonecress).